A 493-amino-acid chain; its full sequence is Activin receptor type-1C (493 aa).

The signal sequence occupies residues 1–25 (MTPARRSALSLALLLVALASDLAAG). At 26 to 113 (LKCVCLLCDS…PDAPRLGPTE (88 aa)) the chain is on the extracellular side. The helical transmembrane segment at 114–134 (LTVVITVPVCLLSIAAMLTIW) threads the bilayer. Residues 135–493 (ACQDRQCTYR…QLCVKEDCKA (359 aa)) lie on the Cytoplasmic side of the membrane. The 30-residue stretch at 165–194 (KTLKDLIYDATASGSGSGPPLLVQRTIART) folds into the GS domain. In terms of domain architecture, Protein kinase spans 195–485 (IVLQEIVGKG…LRVKKTISQL (291 aa)). ATP-binding positions include 201 to 209 (VGKGRFGEV) and Lys222. Residue Asp323 is the Proton acceptor of the active site.

This sequence belongs to the protein kinase superfamily. TKL Ser/Thr protein kinase family. TGFB receptor subfamily. In terms of assembly, binds the type 2 receptor protein ACVR2A. The cofactor is Mg(2+). Mn(2+) is required as a cofactor. Expressed in brain, kidney, lung, liver, testis, ovary, adrenal gland, heart, prostate, gastrointestinal tract, and spleen. Distributed throughout both adult and embryonic central nervous system and pancreatic islet cells.

The protein localises to the membrane. It catalyses the reaction L-threonyl-[receptor-protein] + ATP = O-phospho-L-threonyl-[receptor-protein] + ADP + H(+). It carries out the reaction L-seryl-[receptor-protein] + ATP = O-phospho-L-seryl-[receptor-protein] + ADP + H(+). Functionally, serine/threonine protein kinase which forms a receptor complex on ligand binding. The receptor complex consists of 2 type II and 2 type I transmembrane serine/threonine kinases. Type II receptors phosphorylate and activate type I receptors which autophosphorylate, then bind and activate SMAD transcriptional regulators, SMAD2 and SMAD3. Receptor for activin AB, activin B, activin E and NODAL. Upon NODAL binding, activation results in increased apoptosis and reduced proliferation through suppression of AKT signaling and the activation of Smad2-dependent signaling pathway in pancreatic beta-cells, trophoblasts, epithelial or neuronal cells. Acts as a positive regulator for macrophage activation partially through down-regulation of PPARG expression. The protein is Activin receptor type-1C of Rattus norvegicus (Rat).